Consider the following 269-residue polypeptide: 5'-nucleotidase SurE (269 aa).

A divalent metal cation contacts are provided by aspartate 8, aspartate 9, serine 39, and asparagine 92.

This sequence belongs to the SurE nucleotidase family. It depends on a divalent metal cation as a cofactor.

It is found in the cytoplasm. The catalysed reaction is a ribonucleoside 5'-phosphate + H2O = a ribonucleoside + phosphate. In terms of biological role, nucleotidase that shows phosphatase activity on nucleoside 5'-monophosphates. The protein is 5'-nucleotidase SurE of Psychrobacter cryohalolentis (strain ATCC BAA-1226 / DSM 17306 / VKM B-2378 / K5).